Consider the following 221-residue polypeptide: Probable hydrogenase maturation factor HypB (221 aa).

The G-domain stretch occupies residues alanine 35–valine 196. Ni(2+)-binding residues include cysteine 95 and histidine 96. Zn(2+)-binding residues include cysteine 95, histidine 96, histidine 100, histidine 104, and cysteine 127. Cysteine 127 contacts Ni(2+).

It belongs to the SIMIBI class G3E GTPase family. HypB/HupM subfamily. Homodimer.

Involved in the maturation of [NiFe] hydrogenases. Required for nickel insertion into the metal center of the hydrogenase. Exhibits a low intrinsic GTPase activity, which is essential for nickel insertion. The polypeptide is Probable hydrogenase maturation factor HypB (Methanocaldococcus jannaschii (strain ATCC 43067 / DSM 2661 / JAL-1 / JCM 10045 / NBRC 100440) (Methanococcus jannaschii)).